The following is a 109-amino-acid chain: U16-hexatoxin-Hi1a (109 aa).

Residues 1-16 (LTGHLCCMMIWWQATQ) form the signal peptide. The propeptide occupies 17-43 (VISPPLPVIREENNSHKMGVSLFPLKR).

In terms of processing, contains 2 disulfide bonds. In terms of tissue distribution, expressed by the venom gland.

Its subcellular location is the secreted. Probable ion channel inhibitor. This chain is U16-hexatoxin-Hi1a, found in Hadronyche infensa (Fraser island funnel-web spider).